We begin with the raw amino-acid sequence, 205 residues long: Large ribosomal subunit protein uL3c (205 aa).

The disordered stretch occupies residues 129–154 (SRGPMSHGSKNHRQPGSIGAGTTPGR).

This sequence belongs to the universal ribosomal protein uL3 family. In terms of assembly, part of the 50S ribosomal subunit.

The protein localises to the plastid. Its subcellular location is the chloroplast. In terms of biological role, one of the primary rRNA binding proteins, it binds directly near the 3'-end of the 23S rRNA, where it nucleates assembly of the 50S subunit. The chain is Large ribosomal subunit protein uL3c (rpl3) from Pyropia yezoensis (Susabi-nori).